Consider the following 651-residue polypeptide: Protein EXECUTER 2, chloroplastic (651 aa).

A chloroplast-targeting transit peptide spans 1–69 (MATTQPCLIG…KAPSLSCLRN (69 aa)). Residues 103 to 138 (ESVVSLLKSQLEDAVEKEDFEEAVKLKQAISEATVD) form the UVR domain. Positions 330 to 359 (DATEELVGEGTEETNSSDDEEEVEEEENDS) are disordered.

It is found in the plastid. It localises to the chloroplast. Together with EX1, enables higher plants to perceive singlet oxygen as a stress signal in plastid that activates a genetically determined nuclear stress response program which triggers a programmed cell death (PCD). This transfer of singlet oxygen-induced stress-related signals from the plastid to the nucleus that triggers genetically controlled PCD pathway is unique to photosynthetic eukaryotes and operates under mild stress conditions, impeding photosystem II (PSII) without causing photooxidative damage of the plant. This chain is Protein EXECUTER 2, chloroplastic, found in Arabidopsis thaliana (Mouse-ear cress).